Here is a 96-residue protein sequence, read N- to C-terminus: UPF0235 protein Pfl01_5322 (96 aa).

It belongs to the UPF0235 family.

This Pseudomonas fluorescens (strain Pf0-1) protein is UPF0235 protein Pfl01_5322.